The following is a 300-amino-acid chain: Protein N-terminal and lysine N-methyltransferase EFM7 (300 aa).

S-adenosyl-L-methionine-binding positions include Trp75, 101–103, Asp123, Trp156, and Ser179; that span reads GAG.

This sequence belongs to the class I-like SAM-binding methyltransferase superfamily. EFM7 family.

The protein localises to the cytoplasm. Functionally, S-adenosyl-L-methionine-dependent protein methyltransferase that trimethylates the N-terminal glycine 'Gly-2' of elongation factor 1-alpha, before also catalyzing the mono- and dimethylation of 'Lys-3'. This Cryptococcus neoformans var. neoformans serotype D (strain JEC21 / ATCC MYA-565) (Filobasidiella neoformans) protein is Protein N-terminal and lysine N-methyltransferase EFM7.